The chain runs to 330 residues: DNA-directed RNA polymerase subunit alpha (330 aa).

The tract at residues 1 to 235 (MQGSVTEFLK…EQLEAFVDLR (235 aa)) is alpha N-terminal domain (alpha-NTD). The tract at residues 249 to 330 (FDPILLRPVD…WPPASIADNE (82 aa)) is alpha C-terminal domain (alpha-CTD).

This sequence belongs to the RNA polymerase alpha chain family. As to quaternary structure, homodimer. The RNAP catalytic core consists of 2 alpha, 1 beta, 1 beta' and 1 omega subunit. When a sigma factor is associated with the core the holoenzyme is formed, which can initiate transcription.

The enzyme catalyses RNA(n) + a ribonucleoside 5'-triphosphate = RNA(n+1) + diphosphate. DNA-dependent RNA polymerase catalyzes the transcription of DNA into RNA using the four ribonucleoside triphosphates as substrates. This is DNA-directed RNA polymerase subunit alpha from Yersinia enterocolitica serotype O:8 / biotype 1B (strain NCTC 13174 / 8081).